Reading from the N-terminus, the 55-residue chain is Ferredoxin (55 aa).

2 4Fe-4S ferredoxin-type domains span residues 2–26 and 27–55; these read YKIT…ISEG and SIYE…VPED. The [4Fe-4S] cluster site is built by cysteine 8, cysteine 11, cysteine 14, cysteine 18, cysteine 36, cysteine 39, cysteine 42, and cysteine 46.

[4Fe-4S] cluster serves as cofactor.

Ferredoxins are iron-sulfur proteins that transfer electrons in a wide variety of metabolic reactions. The polypeptide is Ferredoxin (Butyribacterium methylotrophicum).